Here is a 293-residue protein sequence, read N- to C-terminus: Homoserine kinase (293 aa).

Position 84–94 (84–94) interacts with ATP; the sequence is PLSRGLGSSSA.

Belongs to the GHMP kinase family. Homoserine kinase subfamily.

Its subcellular location is the cytoplasm. It carries out the reaction L-homoserine + ATP = O-phospho-L-homoserine + ADP + H(+). Its pathway is amino-acid biosynthesis; L-threonine biosynthesis; L-threonine from L-aspartate: step 4/5. Catalyzes the ATP-dependent phosphorylation of L-homoserine to L-homoserine phosphate. The chain is Homoserine kinase from Nitratiruptor sp. (strain SB155-2).